The chain runs to 97 residues: F-actin-capping protein subunit beta (97 aa).

Disordered regions lie at residues 1–27 (RLPPQQIEKSPWSNKYDPPLEDGAMPS) and 43–66 (KSGSGTMNLGGSLTRQMEKDETVS). Polar residues predominate over residues 43–57 (KSGSGTMNLGGSLTR). Lys-97 is modified (N6-acetyllysine).

Belongs to the F-actin-capping protein beta subunit family. As to quaternary structure, component of the F-actin capping complex, composed of a heterodimer of an alpha and a beta subunit. Subunit of dynactin, a multiprotein complex part of a tripartite complex with dynein and a adapter, such as BICDL1, BICD2 or HOOK3. The dynactin complex is built around ACTR1A/ACTB filament and consists of an actin-related filament composed of a shoulder domain, a pointed end and a barbed end. Its length is defined by its flexible shoulder domain. The soulder is composed of 2 DCTN1 subunits, 4 DCTN2 and 2 DCTN3. The 4 DCNT2 (via N-terminus) bind the ACTR1A filament and act as molecular rulers to determine the length. The pointed end is important for binding dynein-dynactin cargo adapters. Consists of 4 subunits: ACTR10, DCNT4, DCTN5 and DCTN6. The barbed end is composed of a CAPZA1:CAPZB heterodimers, which binds ACTR1A/ACTB filament and dynactin and stabilizes dynactin. Interacts with ARHGAP17. Interaction with RCSD1/CAPZIP. Component of the WASH complex, composed of F-actin-capping protein subunit alpha (CAPZA1, CAPZA2 or CAPZA3), F-actin-capping protein subunit beta (CAPZB), WASH (WASHC1, WASH2P, WASH3P, WASH4P, WASH5P or WASH6P), WASHC2 (WASHC2A or WASHC2C), WASHC3, WASHC4 and WASHC5. Interacts with ACTG1. Directly interacts with CRACD; this interaction decreases binding to actin.

It localises to the cytoplasm. It is found in the cytoskeleton. The protein localises to the myofibril. The protein resides in the sarcomere. Functionally, F-actin-capping proteins bind in a Ca(2+)-independent manner to the fast growing ends of actin filaments (barbed end) thereby blocking the exchange of subunits at these ends. Unlike other capping proteins (such as gelsolin and severin), these proteins do not sever actin filaments. Plays a role in the regulation of cell morphology and cytoskeletal organization. Forms, with CAPZB, the barbed end of the fast growing ends of actin filaments in the dynactin complex and stabilizes dynactin structure. The dynactin multiprotein complex activates the molecular motor dynein for ultra-processive transport along microtubules. This is F-actin-capping protein subunit beta from Mesocricetus auratus (Golden hamster).